Consider the following 1796-residue polypeptide: U3 small nucleolar RNA-associated protein 10 (1796 aa).

HEAT repeat units follow at residues 586–623 (LDLQAMIPYCVAALSDPAKKVRQAAADLITVLSKSNAE), 656–692 (LLQEIIVPALEESVLDEEHISNVLRSHLQSTKDSATG), 861–898 (DLTTNILNAFLESLQDIPKITTDSPATKRRRTSSSDHS), 983–1021 (DTSVGHGDVLVQCIQKSSSPAVQNSALLLVASLANTAPD), 1052–1089 (QTIKEVIPPLVETFRKSRRNLVTSAAELLSSFVIAYEH), 1161–1198 (QPKPTLAATLFNRNTDDDQDLHKTALKELTLLPKVLSS), 1258–1295 (LSIGEFIKAVENLLDRPSISLRQKVLRTLEVRVDQESN), 1302–1340 (TVLLAFLPQLTAVIRDSDDIAYKHTAVACVDKIAEKYGK), 1344–1383 (EAVAAAATTIAGDCCLGQPDKRLRVMALLCLASLVDVLQD), 1492–1529 (SAVEEYLKLLATVLDKHPSTIIAKHISTLSTIFLSALD), 1711–1748 (DHRKELNAAVLRRLRSPSASVRLAAVRCEQSLTDTLGE), and 1752–1789 (EMLSEMLPYISELQDDDDEDVEKETHRWITKIEAILGE). The interval 881–901 (TTDSPATKRRRTSSSDHSRGV) is disordered.

It belongs to the HEATR1/UTP10 family. Component of the ribosomal small subunit (SSU) processome.

It localises to the nucleus. The protein localises to the nucleolus. Involved in nucleolar processing of pre-18S ribosomal RNA. Involved in ribosome biosynthesis. This chain is U3 small nucleolar RNA-associated protein 10, found in Pyricularia oryzae (strain 70-15 / ATCC MYA-4617 / FGSC 8958) (Rice blast fungus).